Here is a 217-residue protein sequence, read N- to C-terminus: Proteasome subunit beta type-6-B like protein (217 aa).

The propeptide at 1–16 is removed in mature form; the sequence is MERHFMDSQIKGVSTG. The active-site Nucleophile is threonine 17.

This sequence belongs to the peptidase T1B family. In terms of assembly, the 26S proteasome consists of a 20S proteasome core and two 19S regulatory subunits. The 20S proteasome core is composed of 28 subunits that are arranged in four stacked rings, resulting in a barrel-shaped structure. The two end rings are each formed by seven alpha subunits, and the two central rings are each formed by seven beta subunits. The catalytic chamber with the active sites is on the inside of the barrel.

Its subcellular location is the cytoplasm. It is found in the nucleus. It carries out the reaction Cleavage of peptide bonds with very broad specificity.. In terms of biological role, the proteasome is a multicatalytic proteinase complex which is characterized by its ability to cleave peptides with Arg, Phe, Tyr, Leu, and Glu adjacent to the leaving group at neutral or slightly basic pH. The proteasome has an ATP-dependent proteolytic activity. This subunit is involved in antigen processing to generate class I binding peptides. In Salmo salar (Atlantic salmon), this protein is Proteasome subunit beta type-6-B like protein (psmb6l-b).